A 123-amino-acid chain; its full sequence is Small ribosomal subunit protein uS12 (123 aa).

The disordered stretch occupies residues 1 to 26; the sequence is MPTLNQLVRKPRKRPVAKSKVPALDA. Position 89 is a 3-methylthioaspartic acid (D89). The disordered stretch occupies residues 104 to 123; that stretch reads TAGVKNRKQSRSKYGAKRPK. The span at 108 to 123 shows a compositional bias: basic residues; that stretch reads KNRKQSRSKYGAKRPK.

This sequence belongs to the universal ribosomal protein uS12 family. As to quaternary structure, part of the 30S ribosomal subunit. Contacts proteins S8 and S17. May interact with IF1 in the 30S initiation complex.

Functionally, with S4 and S5 plays an important role in translational accuracy. In terms of biological role, interacts with and stabilizes bases of the 16S rRNA that are involved in tRNA selection in the A site and with the mRNA backbone. Located at the interface of the 30S and 50S subunits, it traverses the body of the 30S subunit contacting proteins on the other side and probably holding the rRNA structure together. The combined cluster of proteins S8, S12 and S17 appears to hold together the shoulder and platform of the 30S subunit. The protein is Small ribosomal subunit protein uS12 of Acidithiobacillus ferrooxidans (strain ATCC 23270 / DSM 14882 / CIP 104768 / NCIMB 8455) (Ferrobacillus ferrooxidans (strain ATCC 23270)).